Here is a 173-residue protein sequence, read N- to C-terminus: UPF0316 protein Bsph_0745 (173 aa).

3 helical membrane-spanning segments follow: residues 4–24 (IVLILILQLVYVPFLTLRTIF), 31–51 (FLAAIFGMLEMLVYVFGLSLV), and 58–78 (MLAMVVYAVGFGLGIFLGAKI).

Belongs to the UPF0316 family.

It localises to the cell membrane. The polypeptide is UPF0316 protein Bsph_0745 (Lysinibacillus sphaericus (strain C3-41)).